The primary structure comprises 603 residues: Mono(2-hydroxyethyl) terephthalate hydrolase (603 aa).

The first 17 residues, M1–A17, serve as a signal peptide directing secretion. C18 carries N-palmitoyl cysteine lipidation. The S-diacylglycerol cysteine moiety is linked to residue C18. Positions T24–P44 are disordered. The span at L26–P44 shows a compositional bias: pro residues. C51 and C92 are disulfide-bonded. G132 serves as a coordination point for 4-[(2-hydroxyethoxy)carbonyl]benzoate. 4 cysteine pairs are disulfide-bonded: C224/C529, C303/C320, C340/C348, and C577/C599. The active-site Acyl-ester intermediate is S225. E226 contacts 4-[(2-hydroxyethoxy)carbonyl]benzoate. Ca(2+) contacts are provided by D304, D307, L309, D311, and I313. The 4-[(2-hydroxyethoxy)carbonyl]benzoate site is built by R411 and S416. Residues D492 and H528 each act as charge relay system in the active site. H528 is a binding site for 4-[(2-hydroxyethoxy)carbonyl]benzoate.

It belongs to the tannase family.

Its subcellular location is the cell outer membrane. It catalyses the reaction 4-[(2-hydroxyethoxy)carbonyl]benzoate + H2O = terephthalate + ethylene glycol + H(+). Functionally, involved in the degradation and assimilation of the plastic poly(ethylene terephthalate) (PET), which allows I.sakaiensis to use PET as its major energy and carbon source for growth. Likely acts synergistically with PETase to depolymerize PET. Catalyzes the hydrolysis of mono(2-hydroxyethyl) terephthalate (MHET) into its two environmentally benign monomers, terephthalate and ethylene glycol. Does not show activity against PET, bis(hydroxyethyl) terephthalate (BHET), pNP-aliphatic esters or typical aromatic ester compounds catalyzed by the tannase family enzymes, such as ethyl gallate and ethyl ferulate. The chain is Mono(2-hydroxyethyl) terephthalate hydrolase from Piscinibacter sakaiensis (Ideonella sakaiensis).